Here is a 129-residue protein sequence, read N- to C-terminus: Protein Turandot A (129 aa).

The signal sequence occupies residues 1 to 21 (MNSSTALMCFALLLISPLCMG). A glycan (N-linked (GlcNAc...) asparagine) is linked at Asn49.

The protein belongs to the Turandot family. Expressed in the fat body (at protein level).

The protein resides in the secreted. Functionally, a humoral factor that plays a role in stress tolerance; gives increased resistance to the lethal effects of bacterial challenge and stress. Regulated by the JAK/STAT pathway and NF-KB-like Relish pathway in the fat body, upd3 in the hemocytes and Mekk1 in response to septic injury and consequent immune response. The polypeptide is Protein Turandot A (Drosophila melanogaster (Fruit fly)).